A 96-amino-acid polypeptide reads, in one-letter code: SPbeta prophage-derived uncharacterized protein YosV (96 aa).

The protein is SPbeta prophage-derived uncharacterized protein YosV (yosV) of Bacillus subtilis (strain 168).